A 138-amino-acid polypeptide reads, in one-letter code: MGWSYIILFLVATATDVHSQVQLQQPGAELVKPGASVQLSCKASGHTFTNYWIHWVKQRPGQGLEWIGEINPNDGRSNYNEKFKNKATLTVDKSSSTAYMQLSSLTPEEFAVYYCARSDGYYDWFVYWGQGTLVTFSA.

The first 20 residues, 1–20 (MGWSYIILFLVATATDVHSQ), serve as a signal peptide directing secretion. The interval 21 to 49 (VQLQQPGAELVKPGASVQLSCKASGHTFT) is framework-1. An intrachain disulfide couples C41 to C115. The tract at residues 50 to 54 (NYWIH) is complementarity-determining-1. Positions 55–68 (WVKQRPGQGLEWIG) are framework-2. Residues 69 to 85 (EINPNDGRSNYNEKFKN) are complementarity-determining-2. The framework-3 stretch occupies residues 86–117 (KATLTVDKSSSTAYMQLSSLTPEEFAVYYCAR). The complementarity-determining-3 stretch occupies residues 118 to 127 (SDGYYDWFVY). The segment at 128–138 (WGQGTLVTFSA) is framework-4.

In Mus musculus (Mouse), this protein is Ig heavy chain V region TEPC 1017.